The sequence spans 1122 residues: Cytosolic carboxypeptidase 4 (1122 aa).

The disordered stretch occupies residues 287-338 (PGSTSSELPLNLTEEDFDDDGDEEMDKDSDVEAVKEDDDLETDLSKLSSKPG). Over residues 299–313 (TEEDFDDDGDEEMDK) the composition is skewed to acidic residues. The Peptidase M14 domain occupies 731-1021 (YPYTYSTLMT…MYCLGLLILE (291 aa)). Zn(2+) is bound by residues histidine 803, glutamate 806, and histidine 900. Glutamate 985 (proton donor/acceptor) is an active-site residue. Positions 1099 to 1122 (CALNKDEEEEEKEEGTGWRRRSVT) are disordered.

It belongs to the peptidase M14 family. Interacts with MYLK. Interacts with TCF4. Zn(2+) serves as cofactor. Widely expressed at low level. Expressed in eye, muscle, pituitary, testis and to a lower extent in brain.

It is found in the cytoplasm. It localises to the cytosol. It carries out the reaction (L-glutamyl)(n+1)-gamma-L-glutamyl-L-glutamyl-[protein] + H2O = (L-glutamyl)(n)-gamma-L-glutamyl-L-glutamyl-[protein] + L-glutamate. It catalyses the reaction C-terminal L-alpha-aminoacyl-L-glutamyl-L-glutamyl-[tubulin] + H2O = C-terminal L-alpha-aminoacyl-L-glutamyl-[tubulin] + L-glutamate. In terms of biological role, metallocarboxypeptidase that mediates deglutamylation of tubulin and non-tubulin target proteins. Catalyzes the removal of polyglutamate side chains present on the gamma-carboxyl group of glutamate residues within the C-terminal tail of tubulin protein. Specifically cleaves tubulin long-side-chains, while it is not able to remove the branching point glutamate. Also catalyzes the removal of polyglutamate residues from the carboxy-terminus of non-tubulin proteins such as MYLK. The sequence is that of Cytosolic carboxypeptidase 4 from Mus musculus (Mouse).